The following is a 267-amino-acid chain: Acetylglutamate kinase (267 aa).

Substrate is bound by residues G53 to G54, R75, and N167.

Belongs to the acetylglutamate kinase family. ArgB subfamily.

The protein localises to the cytoplasm. The catalysed reaction is N-acetyl-L-glutamate + ATP = N-acetyl-L-glutamyl 5-phosphate + ADP. The protein operates within amino-acid biosynthesis; L-arginine biosynthesis; N(2)-acetyl-L-ornithine from L-glutamate: step 2/4. Functionally, catalyzes the ATP-dependent phosphorylation of N-acetyl-L-glutamate. This is Acetylglutamate kinase from Shewanella pealeana (strain ATCC 700345 / ANG-SQ1).